Here is a 433-residue protein sequence, read N- to C-terminus: O-methyltransferase hasC (433 aa).

S-adenosyl-L-methionine is bound by residues Glu265 and 293–295 (GDF). His313 (proton acceptor) is an active-site residue. A disordered region spans residues 413-433 (SPRANGNGNSAGGLEWESELM).

The protein belongs to the class I-like SAM-binding methyltransferase superfamily. Cation-independent O-methyltransferase family. COMT subfamily.

Its pathway is secondary metabolite biosynthesis. Its function is as follows. O-methyltransferase; part of the gene cluster that mediates the biosynthesis of hexadehydro-astechrome (HAS), a tryptophan-derived iron(III)-complex that acts as a virulence factor in infected mice. Within the pathway, hasC, with the cytochrome P450 monooxygenase hasH and the FAD-linked oxidoreductase hasG, convert the hasE-prenylated Trp-Ala-dipeptide into an O-methylated diketopiperazine that is then released from the hasD NRPS. The HAS biosynthesis begins with the synthesis of a tethered Trp-Ala dipeptide by the NRPS hasD. The 7-dimethylallyltryptophan synthase hasE then catalyzes the prenylation of the hasD-tethered tryptophan or the resulting tethered Trp-Ala dipeptide at the C-7 position of the indole moiety. HAS biosynthesis continues via tethered intermediates with the succesive actions of the cytochrome P450 monooxygenase hasH, the O-methyltransferase hasC, and the FAD-linked oxidoreductase hasG. The resulting O-methylated diketopiperazine is then released from hasD. Finally, three O-methylated diketopiperazine molecules assemble in a trimeric complex with Fe(III) to produce hexadehydro-astechrome. The sequence is that of O-methyltransferase hasC from Aspergillus fumigatus (strain CBS 144.89 / FGSC A1163 / CEA10) (Neosartorya fumigata).